The sequence spans 450 residues: ATP-dependent protease ATPase subunit HslU (450 aa).

ATP contacts are provided by residues V29, G71–E76, D261, E328, and R400.

This sequence belongs to the ClpX chaperone family. HslU subfamily. A double ring-shaped homohexamer of HslV is capped on each side by a ring-shaped HslU homohexamer. The assembly of the HslU/HslV complex is dependent on binding of ATP.

It is found in the cytoplasm. Its function is as follows. ATPase subunit of a proteasome-like degradation complex; this subunit has chaperone activity. The binding of ATP and its subsequent hydrolysis by HslU are essential for unfolding of protein substrates subsequently hydrolyzed by HslV. HslU recognizes the N-terminal part of its protein substrates and unfolds these before they are guided to HslV for hydrolysis. This Rickettsia peacockii (strain Rustic) protein is ATP-dependent protease ATPase subunit HslU.